Here is a 94-residue protein sequence, read N- to C-terminus: ATP synthase F(0) complex subunit f, mitochondrial (94 aa).

Alanine 2 is subject to N-acetylalanine. Serine 3 bears the Phosphoserine mark. N6-acetyllysine is present on lysine 22. The helical transmembrane segment at 68-85 threads the bilayer; it reads MVLACYVLFSYSFSYKHL.

It belongs to the ATPase F chain family. As to quaternary structure, component of the ATP synthase complex composed at least of ATP5F1A/subunit alpha, ATP5F1B/subunit beta, ATP5MC1/subunit c (homooctomer), MT-ATP6/subunit a, MT-ATP8/subunit 8, ATP5ME/subunit e, ATP5MF/subunit f, ATP5MG/subunit g, ATP5MK/subunit k, ATP5MJ/subunit j, ATP5F1C/subunit gamma, ATP5F1D/subunit delta, ATP5F1E/subunit epsilon, ATP5PF/subunit F6, ATP5PB/subunit b, ATP5PD/subunit d, ATP5PO/subunit OSCP. ATP synthase complex consists of a soluble F(1) head domain (subunits alpha(3) and beta(3)) - the catalytic core - and a membrane F(0) domain - the membrane proton channel (subunits c, a, 8, e, f, g, k and j). These two domains are linked by a central stalk (subunits gamma, delta, and epsilon) rotating inside the F1 region and a stationary peripheral stalk (subunits F6, b, d, and OSCP).

The protein resides in the mitochondrion. The protein localises to the mitochondrion inner membrane. Its function is as follows. Subunit f, of the mitochondrial membrane ATP synthase complex (F(1)F(0) ATP synthase or Complex V) that produces ATP from ADP in the presence of a proton gradient across the membrane which is generated by electron transport complexes of the respiratory chain. ATP synthase complex consist of a soluble F(1) head domain - the catalytic core - and a membrane F(1) domain - the membrane proton channel. These two domains are linked by a central stalk rotating inside the F(1) region and a stationary peripheral stalk. During catalysis, ATP synthesis in the catalytic domain of F(1) is coupled via a rotary mechanism of the central stalk subunits to proton translocation. In vivo, can only synthesize ATP although its ATP hydrolase activity can be activated artificially in vitro. Part of the complex F(0) domain. The sequence is that of ATP synthase F(0) complex subunit f, mitochondrial from Homo sapiens (Human).